The chain runs to 420 residues: 2',3'-cyclic-nucleotide 3'-phosphodiesterase (420 aa).

The residue at position 9 (S9) is a Phosphoserine. Phosphotyrosine is present on Y110. Phosphoserine occurs at positions 169, 227, and 239. H250 functions as the Proton acceptor in the catalytic mechanism. A substrate-binding site is contributed by T252. H329 acts as the Proton donor in catalysis. T331 contacts substrate. At S358 the chain carries Phosphoserine. A Cysteine methyl ester modification is found at C417. C417 carries S-farnesyl cysteine lipidation. A propeptide spans 418–420 (TII) (removed in mature form).

This sequence belongs to the 2H phosphoesterase superfamily. CNPase family. As to quaternary structure, exists as monomers and homodimers.

It localises to the membrane. Its subcellular location is the melanosome. It carries out the reaction a nucleoside 2',3'-cyclic phosphate + H2O = a nucleoside 2'-phosphate + H(+). In terms of biological role, catalyzes the formation of 2'-nucleotide products from 2',3'-cyclic substrates. May participate in RNA metabolism in the myelinating cell, CNP is the third most abundant protein in central nervous system myelin. The protein is 2',3'-cyclic-nucleotide 3'-phosphodiesterase of Mus musculus (Mouse).